We begin with the raw amino-acid sequence, 2167 residues long: SH3 and multiple ankyrin repeat domains protein 1 (2167 aa).

The disordered stretch occupies residues 1-63; the sequence is MTHSPATSED…TRGLQGRSMS (63 aa). Low complexity predominate over residues 17 to 32; that stretch reads SECPEGGSESDSSPDG. Residues 33-47 show a composition bias toward gly residues; sequence PGRGPQGTRGRGSGA. Arg43 carries the post-translational modification Omega-N-methylarginine. Tyr186 is subject to Phosphotyrosine. ANK repeat units lie at residues 195–210, 212–245, 246–278, 279–312, 313–345, 346–378, and 379–395; these read VARLLDKGLDPNYHDS, SGETPLTLAAQTEGSVEVIRTLCLGGAHIDFRAR, DGMTALHKAACARHCLALTALLDLGGSPNYKDR, RGLTPLFHTAMVGGDPRCCELLLYNRAQLGIADE, NGWQEIHQACQRGHSQHLEHLLFYGAEPGAQNA, SGNTALHICALYNKETCARILLYRGANKDVKNN, and NGQTPFQVAVIAGNFEL. Disordered stretches follow at residues 413–432 and 453–546; these read SPKYAARRRGPPGAGLTVPP and APGA…SRGR. Residues 453–479 are compositionally biased toward low complexity; that stretch reads APGASSSGTPGPTSGPQGQSQPSAPST. Gly residues predominate over residues 527 to 542; that stretch reads PAGGTGGSGGPGGSLG. Ser540 bears the Phosphoserine mark. Omega-N-methylarginine is present on Arg544. Positions 554 to 613 constitute an SH3 domain; the sequence is VPGRSFMAVKSYQAQGEGEISLSKGEKIKVLSIGEGGFWEGQVKGRVGWFPSDCLEEVAN. 4 positions are modified to phosphoserine: Ser638, Ser641, Ser671, and Ser791. The region spanning 663-757 is the PDZ domain; sequence TVLLQKKDSE…TLMVKVVMVT (95 aa). The interval 841 to 894 is disordered; the sequence is ISASESPGPGGLASLGKHRPKGFFATESSFDPHHRSQPSYDRPSFLPPGPGLML. A Phosphoserine modification is found at Ser898. Disordered regions lie at residues 917–1233, 1245–1294, 1308–1417, 1429–1725, 1740–1787, 1842–1866, 1898–1988, and 2002–2029; these read SRSL…LDFT, RREG…SIDE, GGSS…VLRL, RAGL…AGVA, GQAF…DPVT, KLLPWEEGPGPPPPPLPGPLSQPQA, PWAR…STRH, and RRAPSPSLLPASDHKVSPAPRPSSLPIL. Residues 928-947 show a composition bias toward pro residues; that stretch reads IPPPPTTSPPEPPYSTPPAP. Residue Arg958 is modified to Omega-N-methylarginine. Residues 964 to 980 are compositionally biased toward low complexity; the sequence is PSSGGPLPASSPSSFDG. Over residues 1004 to 1028 the composition is skewed to basic residues; sequence AHHHPPHHHHHHAPPPQPHHHHAHP. Position 1059 is an omega-N-methylarginine (Arg1059). The span at 1064-1085 shows a compositional bias: low complexity; it reads SPTSGAPSPSHHSSSGGSSGPT. Omega-N-methylarginine occurs at positions 1098 and 1109. 2 stretches are compositionally biased toward low complexity: residues 1132–1146 and 1171–1184; these read SIPSASSPTSPALPR and STSSSGRSSQGSST. The span at 1203-1224 shows a compositional bias: pro residues; it reads SPAPATSPVPPSPSPVPTPASP. Residues 1245 to 1256 show a composition bias toward basic and acidic residues; it reads RREGGWQNEARR. Arg1257 bears the Asymmetric dimethylarginine mark. Position 1291 is a phosphoserine (Ser1291). Over residues 1363 to 1372 the composition is skewed to basic and acidic residues; sequence ARERALKESS. The segment covering 1378–1395 has biased composition (pro residues); sequence PQPPPRPPSPRYDAPPPT. Positions 1396-1408 are enriched in basic residues; that stretch reads LHHHSPHSPHSPH. An Omega-N-methylarginine modification is found at Arg1429. A Phosphoserine modification is found at Ser1442. 2 stretches are compositionally biased toward low complexity: residues 1459–1469 and 1530–1541; these read PGVGPLLLQLG and RRVLPTSPTSPR. Pro residues predominate over residues 1589–1615; sequence PLTPGPPHPLPDPPSPATPLPAAPPPA. The segment covering 1624 to 1641 has biased composition (polar residues); that stretch reads DSTASSLTSYDSEVATLT. The span at 1648 to 1676 shows a compositional bias: pro residues; it reads PGDPPAPGPPAPAAPAPPAPQPGPDPPPG. The span at 1684–1694 shows a compositional bias: basic and acidic residues; the sequence is VDSRSSSDHPL. Positions 1695–1708 are enriched in low complexity; it reads ETISSASTLSSLSA. The span at 1709–1724 shows a compositional bias: gly residues; it reads EGGGNTGGVAGGGAGV. Pro residues predominate over residues 1850-1861; the sequence is PGPPPPPLPGPL. Arg1901 carries the post-translational modification Omega-N-methylarginine. 3 stretches are compositionally biased toward low complexity: residues 1934–1945, 1960–1985, and 2002–2012; these read SQTSLLSKPSSS, TGSGVSSSTAAAPGATSPSASSASAS, and RRAPSPSLLPA. 3 positions are modified to omega-N-methylarginine: Arg2022, Arg2042, and Arg2080. An SAM domain is found at 2104 to 2167; the sequence is WTKFDVADWL…DRALKFFLER (64 aa).

Belongs to the SHANK family. In terms of assembly, may homomultimerize via its SAM domain. Interacts with the C-terminus of SSTR2 via the PDZ domain. Interacts with SHARPIN, SPTAN1 and DLGAP1/GKAP. Part of a complex with DLG4/PSD-95 and DLGAP1/GKAP. Interacts with BAIAP2. Interacts with IGSF9. Interacts with HOMER1 and HOMER3. In terms of tissue distribution, expressed only in brain (neuropil of cortex, CA1 region hippocampus and molecular layer of cerebellum).

The protein localises to the cytoplasm. It localises to the synapse. Its subcellular location is the postsynaptic density. Functionally, seems to be an adapter protein in the postsynaptic density (PSD) of excitatory synapses that interconnects receptors of the postsynaptic membrane including NMDA-type and metabotropic glutamate receptors, and the actin-based cytoskeleton. Plays a role in the structural and functional organization of the dendritic spine and synaptic junction. Overexpression promotes maturation of dendritic spines and the enlargement of spine heads via its ability to recruit Homer to postsynaptic sites, and enhances presynaptic function. The protein is SH3 and multiple ankyrin repeat domains protein 1 (Shank1) of Rattus norvegicus (Rat).